We begin with the raw amino-acid sequence, 120 residues long: Alanine racemase (120 aa).

Tyr-24 acts as the Proton acceptor; specific for L-alanine in catalysis.

This sequence belongs to the alanine racemase family. Homodimer. The cofactor is pyridoxal 5'-phosphate.

It catalyses the reaction L-alanine = D-alanine. Functionally, highly specific to D- and L-alanine and does not catalyze the racemization of other amino acids. In Penaeus monodon (Giant tiger prawn), this protein is Alanine racemase.